We begin with the raw amino-acid sequence, 450 residues long: GTPase Der (450 aa).

2 EngA-type G domains span residues 3–170 (PTIA…LATG) and 183–356 (LKIA…AECS). Residues 9–16 (GRPNVGKS), 56–60 (DTGGL), 122–125 (NKVD), 189–196 (GRPNAGKS), 236–240 (DTAGV), and 301–304 (NKID) each bind GTP. In terms of domain architecture, KH-like spans 357 to 441 (LRISTGQLNR…PLNIVFRSTF (85 aa)).

The protein belongs to the TRAFAC class TrmE-Era-EngA-EngB-Septin-like GTPase superfamily. EngA (Der) GTPase family. In terms of assembly, associates with the 50S ribosomal subunit.

Its function is as follows. GTPase that plays an essential role in the late steps of ribosome biogenesis. This chain is GTPase Der, found in Maridesulfovibrio salexigens (strain ATCC 14822 / DSM 2638 / NCIMB 8403 / VKM B-1763) (Desulfovibrio salexigens).